The following is a 207-amino-acid chain: SPRY domain-containing protein 4 (207 aa).

Residues Y12 to L207 form the B30.2/SPRY domain. Residues K53 and K130 each carry the N6-acetyllysine modification. K139 bears the N6-succinyllysine mark.

This chain is SPRY domain-containing protein 4 (Spryd4), found in Rattus norvegicus (Rat).